We begin with the raw amino-acid sequence, 244 residues long: Flavin-dependent thymidylate synthase (244 aa).

One can recognise a ThyX domain in the interval 17-239 (ITVELVKHSA…PETHAAFEKQ (223 aa)). FAD is bound by residues S68, 91 to 93 (RHR), and E99. Residues 88-91 (EFMR), 99-103 (EESGR), and R171 each bind dUMP. The ThyX motif motif lies at 91–101 (RHRIASYNEES). Residues 187–189 (NAR) and N193 each bind FAD. R198 contributes to the dUMP binding site. The Involved in ionization of N3 of dUMP, leading to its activation role is filled by R198.

The protein belongs to the thymidylate synthase ThyX family. In terms of assembly, homotetramer. It depends on FAD as a cofactor.

It carries out the reaction dUMP + (6R)-5,10-methylene-5,6,7,8-tetrahydrofolate + NADPH + H(+) = dTMP + (6S)-5,6,7,8-tetrahydrofolate + NADP(+). It participates in pyrimidine metabolism; dTTP biosynthesis. Functionally, catalyzes the reductive methylation of 2'-deoxyuridine-5'-monophosphate (dUMP) to 2'-deoxythymidine-5'-monophosphate (dTMP) while utilizing 5,10-methylenetetrahydrofolate (mTHF) as the methyl donor, and NADPH and FADH(2) as the reductant. This is Flavin-dependent thymidylate synthase from Tropheryma whipplei (strain Twist) (Whipple's bacillus).